The following is a 41-amino-acid chain: Photosystem I reaction center subunit IX (41 aa).

A helical membrane pass occupies residues 7 to 27 (YLSTAPVLATVWMIITAGILI).

Belongs to the PsaJ family.

Its subcellular location is the cellular thylakoid membrane. Functionally, may help in the organization of the PsaE and PsaF subunits. In Trichodesmium erythraeum (strain IMS101), this protein is Photosystem I reaction center subunit IX.